The sequence spans 264 residues: Thymidylate synthase (264 aa).

Arg-21 contributes to the dUMP binding site. His-51 is a (6R)-5,10-methylene-5,6,7,8-tetrahydrofolate binding site. Residue 126-127 coordinates dUMP; sequence RR. Cys-146 functions as the Nucleophile in the catalytic mechanism. DUMP contacts are provided by residues 166-169, Asn-177, and 207-209; these read RSAD and HIY. Asp-169 is a binding site for (6R)-5,10-methylene-5,6,7,8-tetrahydrofolate. Ala-263 provides a ligand contact to (6R)-5,10-methylene-5,6,7,8-tetrahydrofolate.

It belongs to the thymidylate synthase family. Bacterial-type ThyA subfamily. As to quaternary structure, homodimer.

It is found in the cytoplasm. The enzyme catalyses dUMP + (6R)-5,10-methylene-5,6,7,8-tetrahydrofolate = 7,8-dihydrofolate + dTMP. Its pathway is pyrimidine metabolism; dTTP biosynthesis. Functionally, catalyzes the reductive methylation of 2'-deoxyuridine-5'-monophosphate (dUMP) to 2'-deoxythymidine-5'-monophosphate (dTMP) while utilizing 5,10-methylenetetrahydrofolate (mTHF) as the methyl donor and reductant in the reaction, yielding dihydrofolate (DHF) as a by-product. This enzymatic reaction provides an intracellular de novo source of dTMP, an essential precursor for DNA biosynthesis. The protein is Thymidylate synthase of Vesicomyosocius okutanii subsp. Calyptogena okutanii (strain HA).